The primary structure comprises 422 residues: Protein arginine methyltransferase NDUFAF7, mitochondrial (422 aa).

A mitochondrion-targeting transit peptide spans 1–28 (MRTLLRLKRLMPEVLWTKRSCSSSSINK).

This sequence belongs to the NDUFAF7 family.

It is found in the mitochondrion. The enzyme catalyses L-arginyl-[protein] + 2 S-adenosyl-L-methionine = N(omega),N(omega)'-dimethyl-L-arginyl-[protein] + 2 S-adenosyl-L-homocysteine + 2 H(+). In terms of biological role, arginine methyltransferase involved in the assembly or stability of mitochondrial NADH:ubiquinone oxidoreductase complex (complex I). Acts by mediating symmetric dimethylation of 'Arg-118' of ndufs2 after it assembles into the complex I, stabilizing the early intermediate complex. The sequence is that of Protein arginine methyltransferase NDUFAF7, mitochondrial from Danio rerio (Zebrafish).